The chain runs to 131 residues: MPRPKPRSPRRRGRPPPAAPPPPPARPRARRYRPGQRALREIRRYQSSTALLLRRQPFARVVREICLLFTRGVDYRWQAMALLALQEAAEAFLVHLLEDAYLCSLHARRVTLYPKDLQLARRLRGLQGEGF.

A compositionally biased stretch (basic residues) spans 1–14; that stretch reads MPRPKPRSPRRRGR. The interval 1 to 33 is disordered; sequence MPRPKPRSPRRRGRPPPAAPPPPPARPRARRYR. The span at 15-26 shows a compositional bias: pro residues; it reads PPPAAPPPPPAR. The segment at 34 to 131 is H3-like; that stretch reads PGQRALREIR…RLRGLQGEGF (98 aa).

The protein belongs to the histone H3 family. In terms of assembly, component of centromeric nucleosomes, where DNA is wrapped around a histone octamer core. The octamer contains two molecules each of H2A, H2B, CENPA and H4 assembled in one CENPA-H4 heterotetramer and two H2A-H2B heterodimers. CENPA modulates the DNA-binding characteristics of nucleosomes so that protruding DNA ends have higher flexibility than in nucleosomes containing conventional histone H3.

The protein resides in the nucleus. It localises to the chromosome. The protein localises to the centromere. Its function is as follows. Histone H3-like nucleosomal protein that is specifically found in centromeric nucleosomes. Replaces conventional H3 in the nucleosome core of centromeric chromatin that serves as an assembly site for the inner kinetochore. The presence of CENPA subtly modifies the nucleosome structure and the way DNA is wrapped around the nucleosome and gives rise to protruding DNA ends that are less well-ordered and rigid compared to nucleosomes containing histone H3. May serve as an epigenetic mark that propagates centromere identity through replication and cell division. Required for recruitment and assembly of kinetochore proteins, and as a consequence required for progress through mitosis, chromosome segregation and cytokinesis. The protein is Histone H3-like centromeric protein A (CENPA) of Gallus gallus (Chicken).